The chain runs to 940 residues: Isoleucine--tRNA ligase (940 aa).

The 'HIGH' region signature appears at 58–68; that stretch reads PYANGSIHIGH. Position 564 (Glu-564) interacts with L-isoleucyl-5'-AMP. The short motif at 605–609 is the 'KMSKS' region element; it reads KMSKS. Residue Lys-608 participates in ATP binding. 4 residues coordinate Zn(2+): Cys-903, Cys-906, Cys-923, and Cys-926.

This sequence belongs to the class-I aminoacyl-tRNA synthetase family. IleS type 1 subfamily. Monomer. It depends on Zn(2+) as a cofactor.

It is found in the cytoplasm. It catalyses the reaction tRNA(Ile) + L-isoleucine + ATP = L-isoleucyl-tRNA(Ile) + AMP + diphosphate. Its function is as follows. Catalyzes the attachment of isoleucine to tRNA(Ile). As IleRS can inadvertently accommodate and process structurally similar amino acids such as valine, to avoid such errors it has two additional distinct tRNA(Ile)-dependent editing activities. One activity is designated as 'pretransfer' editing and involves the hydrolysis of activated Val-AMP. The other activity is designated 'posttransfer' editing and involves deacylation of mischarged Val-tRNA(Ile). The polypeptide is Isoleucine--tRNA ligase (Shewanella putrefaciens (strain CN-32 / ATCC BAA-453)).